Consider the following 214-residue polypeptide: A-type ATP synthase subunit D (214 aa).

Belongs to the V-ATPase D subunit family. Has multiple subunits with at least A(3), B(3), C, D, E, F, H, I and proteolipid K(x).

It is found in the cell membrane. In terms of biological role, component of the A-type ATP synthase that produces ATP from ADP in the presence of a proton gradient across the membrane. This Pyrococcus furiosus (strain ATCC 43587 / DSM 3638 / JCM 8422 / Vc1) protein is A-type ATP synthase subunit D.